A 412-amino-acid polypeptide reads, in one-letter code: tRNA N6-adenosine threonylcarbamoyltransferase, mitochondrial (412 aa).

Residues 1–78 (MLCLVYNSIL…IICLNTHRTI (78 aa)) constitute a mitochondrion transit peptide. Residues H157 and H161 each contribute to the a divalent metal cation site. Residues 179-183 (LVSGG), D212, A228, E232, 328-329 (RN), and S363 contribute to the substrate site. D364 is an a divalent metal cation binding site.

This sequence belongs to the KAE1 / TsaD family. Homodimer. A divalent metal cation serves as cofactor.

Its subcellular location is the mitochondrion. It carries out the reaction L-threonylcarbamoyladenylate + adenosine(37) in tRNA = N(6)-L-threonylcarbamoyladenosine(37) in tRNA + AMP + H(+). Functionally, required for the formation of a threonylcarbamoyl group on adenosine at position 37 (t(6)A37) in mitochondrial tRNAs that read codons beginning with adenine. Probably involved in the transfer of the threonylcarbamoyl moiety of threonylcarbamoyl-AMP (TC-AMP) to the N6 group of A37. Involved in mitochondrial genome maintenance. The sequence is that of tRNA N6-adenosine threonylcarbamoyltransferase, mitochondrial (pgp1) from Schizosaccharomyces pombe (strain 972 / ATCC 24843) (Fission yeast).